We begin with the raw amino-acid sequence, 307 residues long: Protein rep (307 aa).

Tyrosine 219 is a binding site for DNA.

This sequence belongs to the Gram-positive plasmids replication protein type 1 family.

This Bacillus sp protein is Protein rep (repA).